Reading from the N-terminus, the 404-residue chain is Inner membrane transport protein YdiM (404 aa).

Topologically, residues 1–5 (MKNPY) are periplasmic. A helical membrane pass occupies residues 6 to 26 (FPTALGLYFNYLVHGMGVLLM). At 27-43 (SLNMASLETLWQTNAAG) the chain is on the cytoplasmic side. A helical membrane pass occupies residues 44–64 (VSIVISSLGIGRLSVLLFAGL). Residues 65–84 (LSDRFGRRPFIMLGMCCYMA) are Periplasmic-facing. The chain crosses the membrane as a helical span at residues 85–105 (FFFGILQTNNIIIAYVFGFLA). Over 106-132 (GMANSFLDAGTYPSLMEAFPRSPGTAN) the chain is Cytoplasmic. The helical transmembrane segment at 133 to 153 (ILIKAFVSSGQFLLPLIISLL) threads the bilayer. The Periplasmic segment spans residues 154 to 157 (VWAE). The chain crosses the membrane as a helical span at residues 158–178 (LWFGWSFMIAAGIMFINALFL). Over 179 to 206 (YRCTFPPHPGRRLPVIKKTTSSTEHRCS) the chain is Cytoplasmic. A helical membrane pass occupies residues 207-227 (IIDLASYTLYGYISMATFYLV). At 228–246 (SQWLAQYGQFVAGMSYTMS) the chain is on the periplasmic side. The chain crosses the membrane as a helical span at residues 247–267 (IKLLSIYTVGSLLCVFITAPL). At 268-273 (IRNTVR) the chain is on the cytoplasmic side. A helical membrane pass occupies residues 274–294 (PTTLLMLYTFISFIALFTVCL). The Periplasmic portion of the chain corresponds to 295-296 (HP). The helical transmembrane segment at 297–317 (TFYVVIIFAFVIGFTSAGGVV) threads the bilayer. Over 318–336 (QIGLTLMAERFPYAKGKAT) the chain is Cytoplasmic. The chain crosses the membrane as a helical span at residues 337–357 (GIYYSAGSIATFTIPLITAHL). Residues 358–364 (SQRSIAD) lie on the Periplasmic side of the membrane. The chain crosses the membrane as a helical span at residues 365–385 (IMWFDTAIAAIGFLLALFIGL). The Cytoplasmic portion of the chain corresponds to 386–404 (RSRKKTRHHSLKENVAPGG).

This sequence belongs to the major facilitator superfamily.

The protein localises to the cell inner membrane. In Escherichia coli (strain K12), this protein is Inner membrane transport protein YdiM (ydiM).